The sequence spans 249 residues: Thrombin-like enzyme barnettobin (249 aa).

Residues 1–10 (APKELQVSYA) form the signal peptide. A propeptide spanning residues 11–16 (HKSSEL) is cleaved from the precursor. One can recognise a Peptidase S1 domain in the interval 17-240 (VIGGDECDIN…YPPWIQSIIA (224 aa)). 6 disulfides stabilise this stretch: C23–C154, C41–C57, C89–C247, C133–C201, C165–C180, and C191–C216. Active-site charge relay system residues include H56 and D101. 2 N-linked (GlcNAc...) asparagine glycosylation sites follow: N145 and N161. The Charge relay system role is filled by S195. N-linked (GlcNAc...) asparagine glycosylation occurs at N242.

This sequence belongs to the peptidase S1 family. Snake venom subfamily. In terms of assembly, monomer. Glycoprotein, contains approx. 52% carbohydrate which could be removed by N-glycosidase. Glycosylation is important, since deglycosylated barnettobin loses its clotting and defibrinogenating effects. As to expression, expressed by the venom gland.

It is found in the secreted. Its activity is regulated as follows. Both coagulant and amidolytic activities are inhibited by PMSF. Amidolytic activity is partially inhibited by DTT, chymostatin, SBTI and TLCK, but not by heparin and EDTA. Its function is as follows. Thrombin-like snake venom serine protease that releases only fibrinopeptide A from human Aalpha chain of fibrinogen (specific coagulant activity was 251.7 NIH thrombin units/mg). Also shows fibrino(geno)lytic activities in vitro and defibrinogenating effects in vivo. The polypeptide is Thrombin-like enzyme barnettobin (Bothrops barnetti (Barnett's lancehead)).